Here is a 463-residue protein sequence, read N- to C-terminus: RuvB-like helicase 2 (463 aa).

Glycine 76–threonine 83 lines the ATP pocket.

This sequence belongs to the RuvB family. In terms of assembly, may form heterododecamers with RVB1. Component of the SWR1 chromatin remodeling complex, the INO80 chromatin remodeling complex, and of the R2TP complex.

It localises to the nucleus. It carries out the reaction ATP + H2O = ADP + phosphate + H(+). In terms of biological role, DNA helicase which participates in several chromatin remodeling complexes, including the SWR1 and the INO80 complexes. The SWR1 complex mediates the ATP-dependent exchange of histone H2A for the H2A variant HZT1 leading to transcriptional regulation of selected genes by chromatin remodeling. The INO80 complex remodels chromatin by shifting nucleosomes and is involved in DNA repair. Also involved in pre-rRNA processing. In Cryptococcus neoformans var. neoformans serotype D (strain JEC21 / ATCC MYA-565) (Filobasidiella neoformans), this protein is RuvB-like helicase 2 (RVB2).